We begin with the raw amino-acid sequence, 231 residues long: 7-cyano-7-deazaguanine synthase (231 aa).

8-18 (FSGGQDSTTCL) provides a ligand contact to ATP. C188, C197, C200, and C203 together coordinate Zn(2+).

Belongs to the QueC family. The cofactor is Zn(2+).

It carries out the reaction 7-carboxy-7-deazaguanine + NH4(+) + ATP = 7-cyano-7-deazaguanine + ADP + phosphate + H2O + H(+). It participates in purine metabolism; 7-cyano-7-deazaguanine biosynthesis. Catalyzes the ATP-dependent conversion of 7-carboxy-7-deazaguanine (CDG) to 7-cyano-7-deazaguanine (preQ(0)). The chain is 7-cyano-7-deazaguanine synthase from Escherichia coli (strain SMS-3-5 / SECEC).